A 372-amino-acid polypeptide reads, in one-letter code: Proline-rich P65 protein homolog (372 aa).

Low complexity predominate over residues 1-37 (MEKNRSAFQQNQQASNQPFNQDQNQYYQDPNQQQFNQ). The disordered stretch occupies residues 1–100 (MEKNRSAFQQ…GFDPNQQYYQ (100 aa)). Tandem repeats lie at residues 29-40 (DPNQQQFNQSGF), 41-52 (DPNQQQFNQPGF), 53-60 (DPNQQYYQ), 61-72 (DPNQQQFNQAGF), 73-80 (DQNQQYYQ), 81-92 (DPNQQQFNQPGF), 93-100 (DPNQQYYQ), 101-112 (DPNQQQFNQAGF), 113-119 (DQNQYYQ), 120-131 (DPNQQQFNQSGF), 132-138 (DQNQYYQ), 139-150 (DPNQQQFNQPSF), and 151-162 (DLNNQQFNQPGF). The span at 38-49 (SGFDPNQQQFNQ) shows a compositional bias: polar residues. Residues 53–100 (DPNQQYYQDPNQQQFNQAGFDQNQQYYQDPNQQQFNQPGFDPNQQYYQ) are compositionally biased toward low complexity. Residues 122–150 (NQQQFNQSGFDQNQYYQDPNQQQFNQPSF) form a disordered region.

This is Proline-rich P65 protein homolog from Mycoplasma genitalium (strain ATCC 33530 / DSM 19775 / NCTC 10195 / G37) (Mycoplasmoides genitalium).